A 73-amino-acid polypeptide reads, in one-letter code: Cytochrome b559 subunit alpha (73 aa).

Residues 21 to 35 (IIHSITVPSLFIAGW) traverse the membrane as a helical segment. H23 contacts heme.

Belongs to the PsbE/PsbF family. As to quaternary structure, heterodimer of an alpha subunit and a beta subunit. PSII is composed of 1 copy each of membrane proteins PsbA, PsbB, PsbC, PsbD, PsbE, PsbF, PsbH, PsbI, PsbJ, PsbK, PsbL, PsbM, PsbT, PsbY, PsbZ, Psb30/Ycf12, at least 3 peripheral proteins of the oxygen-evolving complex and a large number of cofactors. It forms dimeric complexes. It depends on heme b as a cofactor.

Its subcellular location is the plastid. It is found in the chloroplast thylakoid membrane. This b-type cytochrome is tightly associated with the reaction center of photosystem II (PSII). PSII is a light-driven water:plastoquinone oxidoreductase that uses light energy to abstract electrons from H(2)O, generating O(2) and a proton gradient subsequently used for ATP formation. It consists of a core antenna complex that captures photons, and an electron transfer chain that converts photonic excitation into a charge separation. This chain is Cytochrome b559 subunit alpha, found in Bigelowiella natans (Pedinomonas minutissima).